The following is a 146-amino-acid chain: Small ribosomal subunit protein eS17 (146 aa).

The protein belongs to the eukaryotic ribosomal protein eS17 family. In terms of assembly, component of the small ribosomal subunit (SSU). Mature N.crassa ribosomes consist of a small (40S) and a large (60S) subunit. The 40S small subunit contains 1 molecule of ribosomal RNA (18S rRNA) and at least 32 different proteins. The large 60S subunit contains 3 rRNA molecules (26S, 5.8S and 5S rRNA) and at least 42 different proteins.

The protein localises to the cytoplasm. In terms of biological role, component of the ribosome, a large ribonucleoprotein complex responsible for the synthesis of proteins in the cell. The small ribosomal subunit (SSU) binds messenger RNAs (mRNAs) and translates the encoded message by selecting cognate aminoacyl-transfer RNA (tRNA) molecules. The large subunit (LSU) contains the ribosomal catalytic site termed the peptidyl transferase center (PTC), which catalyzes the formation of peptide bonds, thereby polymerizing the amino acids delivered by tRNAs into a polypeptide chain. The nascent polypeptides leave the ribosome through a tunnel in the LSU and interact with protein factors that function in enzymatic processing, targeting, and the membrane insertion of nascent chains at the exit of the ribosomal tunnel. This Neurospora crassa (strain ATCC 24698 / 74-OR23-1A / CBS 708.71 / DSM 1257 / FGSC 987) protein is Small ribosomal subunit protein eS17 (rps-17).